Consider the following 227-residue polypeptide: Deoxyribose-phosphate aldolase (227 aa).

The active-site Proton donor/acceptor is the aspartate 98. Lysine 161 functions as the Schiff-base intermediate with acetaldehyde in the catalytic mechanism. Residue lysine 191 is the Proton donor/acceptor of the active site.

Belongs to the DeoC/FbaB aldolase family. DeoC type 1 subfamily.

Its subcellular location is the cytoplasm. The catalysed reaction is 2-deoxy-D-ribose 5-phosphate = D-glyceraldehyde 3-phosphate + acetaldehyde. The protein operates within carbohydrate degradation; 2-deoxy-D-ribose 1-phosphate degradation; D-glyceraldehyde 3-phosphate and acetaldehyde from 2-deoxy-alpha-D-ribose 1-phosphate: step 2/2. In terms of biological role, catalyzes a reversible aldol reaction between acetaldehyde and D-glyceraldehyde 3-phosphate to generate 2-deoxy-D-ribose 5-phosphate. The chain is Deoxyribose-phosphate aldolase from Frankia alni (strain DSM 45986 / CECT 9034 / ACN14a).